A 1789-amino-acid polypeptide reads, in one-letter code: Protein TIC 214 (1789 aa).

Transmembrane regions (helical) follow at residues 19 to 39 (IINS…FSIG), 68 to 88 (FIAG…HLAL), 91 to 111 (PHTI…WNNH), 133 to 153 (VFLN…SSML), 176 to 196 (VGWL…LVWI), and 227 to 247 (IFSI…PSPI).

The protein belongs to the TIC214 family. As to quaternary structure, part of the Tic complex.

Its subcellular location is the plastid. The protein resides in the chloroplast inner membrane. Its function is as follows. Involved in protein precursor import into chloroplasts. May be part of an intermediate translocation complex acting as a protein-conducting channel at the inner envelope. The chain is Protein TIC 214 from Capsella bursa-pastoris (Shepherd's purse).